A 37-amino-acid polypeptide reads, in one-letter code: Large ribosomal subunit protein bL36A (37 aa).

The protein belongs to the bacterial ribosomal protein bL36 family.

This is Large ribosomal subunit protein bL36A from Leifsonia xyli subsp. xyli (strain CTCB07).